Here is a 434-residue protein sequence, read N- to C-terminus: ATP-dependent protease ATPase subunit HslU (434 aa).

Residues Ile-18, 60-65 (GVGKTE), Asp-247, Glu-312, and Arg-384 each bind ATP.

It belongs to the ClpX chaperone family. HslU subfamily. A double ring-shaped homohexamer of HslV is capped on each side by a ring-shaped HslU homohexamer. The assembly of the HslU/HslV complex is dependent on binding of ATP.

The protein resides in the cytoplasm. Functionally, ATPase subunit of a proteasome-like degradation complex; this subunit has chaperone activity. The binding of ATP and its subsequent hydrolysis by HslU are essential for unfolding of protein substrates subsequently hydrolyzed by HslV. HslU recognizes the N-terminal part of its protein substrates and unfolds these before they are guided to HslV for hydrolysis. The polypeptide is ATP-dependent protease ATPase subunit HslU (Brucella ovis (strain ATCC 25840 / 63/290 / NCTC 10512)).